The following is a 329-amino-acid chain: Transmembrane protein I329L (329 aa).

Positions 1–31 (MLRVFIFFVFLGSGLAGRIKPQITCKYFISE) are cleaved as a signal peptide. N32, N39, N44, N76, N82, and N101 each carry an N-linked (GlcNAc...) asparagine; by host glycan. At 32-239 (NNTWYKYNVT…NTERYKNCYP (208 aa)) the chain is on the extracellular side. An LRR repeat occupies 112 to 133 (ELKFLDLRYNNLQFIDYNILRK). N-linked (GlcNAc...) asparagine; by host glycans are attached at residues N185 and N219. C195 and C237 are disulfide-bonded. The chain crosses the membrane as a helical span at residues 240–260 (FVLVSILCSCISFLFLIICLL). Over 261-329 (RSICKKYSCT…EKKASCSRRK (69 aa)) the chain is Cytoplasmic.

Belongs to the asfivirus I329L family. Post-translationally, highly glycosylated.

The protein resides in the host endoplasmic reticulum membrane. It is found in the host Golgi apparatus membrane. Viral TLR3 homolog that probably prevents TLR3 dimerization and subsequent induction of IFN. Inhibits dsRNA-stimulated activation of NF-kB and IRF3. The sequence is that of Transmembrane protein I329L from Ornithodoros (relapsing fever ticks).